The sequence spans 476 residues: Argininosuccinate lyase (476 aa).

Belongs to the lyase 1 family. Argininosuccinate lyase subfamily.

It localises to the cytoplasm. The catalysed reaction is 2-(N(omega)-L-arginino)succinate = fumarate + L-arginine. It functions in the pathway amino-acid biosynthesis; L-arginine biosynthesis; L-arginine from L-ornithine and carbamoyl phosphate: step 3/3. The chain is Argininosuccinate lyase from Acaryochloris marina (strain MBIC 11017).